The sequence spans 277 residues: Ribosomal RNA small subunit methyltransferase A (277 aa).

Residues Asn20, Leu22, Gly47, Glu68, Asp93, and Asn114 each contribute to the S-adenosyl-L-methionine site.

It belongs to the class I-like SAM-binding methyltransferase superfamily. rRNA adenine N(6)-methyltransferase family. RsmA subfamily.

Its subcellular location is the cytoplasm. It catalyses the reaction adenosine(1518)/adenosine(1519) in 16S rRNA + 4 S-adenosyl-L-methionine = N(6)-dimethyladenosine(1518)/N(6)-dimethyladenosine(1519) in 16S rRNA + 4 S-adenosyl-L-homocysteine + 4 H(+). Its function is as follows. Specifically dimethylates two adjacent adenosines (A1518 and A1519) in the loop of a conserved hairpin near the 3'-end of 16S rRNA in the 30S particle. May play a critical role in biogenesis of 30S subunits. In Aliivibrio salmonicida (strain LFI1238) (Vibrio salmonicida (strain LFI1238)), this protein is Ribosomal RNA small subunit methyltransferase A.